A 744-amino-acid polypeptide reads, in one-letter code: Palmitoyltransferase ZDHHC5-A (744 aa).

Gly residues predominate over residues 1–11 (MPSGSMSGGVS). The disordered stretch occupies residues 1 to 25 (MPSGSMSGGVSGPTSPPHPTVPSRP). Residues 1-30 (MPSGSMSGGVSGPTSPPHPTVPSRPLRPSR) are Cytoplasmic-facing. A helical transmembrane segment spans residues 31–51 (YVPVSAATAFLVGSTTLFFCF). Topologically, residues 52–61 (TCPWLSEQFS) are extracellular. A helical membrane pass occupies residues 62-82 (VAVPIYNGVMFMFVLANFCMA). Over 83–167 (TFMDPGIFPR…IGRRNYRYFF (85 aa)) the chain is Cytoplasmic. The 51-residue stretch at 121–171 (KWCSTCRFYRPPRCSHCSVCDNCVEDFDHHCPWVNNCIGRRNYRYFFLFLL) folds into the DHHC domain. The active-site S-palmitoyl cysteine intermediate is the Cys-151. The chain crosses the membrane as a helical span at residues 168 to 188 (LFLLSLTAHIMGVFGFGLLFI). Residues 189–208 (LYHTQQLDRVHSAVTMAVMC) are Extracellular-facing. The helical transmembrane segment at 209 to 229 (VAGLFFIPVAGLTGFHVVLVA) threads the bilayer. The Cytoplasmic portion of the chain corresponds to 230–744 (RGRTTNEQVT…VGGTTYEISV (515 aa)). Disordered stretches follow at residues 314–523 (SLEM…PVVG), 556–645 (QHAV…SLSY), and 664–744 (SVAG…EISV). The segment covering 369-393 (TYSSPGKNHTALTHAYANQSSQQPG) has biased composition (polar residues). Residues 398-413 (PSLDGREGGGAERSGA) show a composition bias toward basic and acidic residues. Over residues 415-428 (RTGGGPGGPPGSGI) the composition is skewed to gly residues. The segment covering 460–501 (THNAPPSEATTSTSYKSLANQTPPQAARNGSLSYDSLLTPSE) has biased composition (polar residues). The span at 571–584 (PERERERLLHDSQA) shows a compositional bias: basic and acidic residues. The segment covering 585-601 (QHHHHHHHHHHHHRPPR) has biased composition (basic residues). 2 stretches are compositionally biased toward low complexity: residues 621-630 (RTRSTDTTHP) and 689-723 (PKPSSTPSSPTHPISVSTRPGQAHSSAGSSQSPAH). Residues 725-737 (PGGGVKKVTGVGG) are compositionally biased toward gly residues.

It belongs to the DHHC palmitoyltransferase family. ERF2/ZDHHC9 subfamily.

It is found in the cell membrane. It catalyses the reaction L-cysteinyl-[protein] + hexadecanoyl-CoA = S-hexadecanoyl-L-cysteinyl-[protein] + CoA. Functionally, palmitoyltransferase that catalyzes the addition of palmitate onto various protein substrates and is involved in a variety of cellular processes. The chain is Palmitoyltransferase ZDHHC5-A from Danio rerio (Zebrafish).